Here is a 104-residue protein sequence, read N- to C-terminus: uncharacterized protein (104 aa).

Disordered regions lie at residues 1–20 and 83–104; these read MTETSTAKVATTKKSTTTRK and TASASSSGKKVVASKKKVVAKK. Residues 83-93 show a composition bias toward low complexity; it reads TASASSSGKKV. Positions 94–104 are enriched in basic residues; the sequence is VASKKKVVAKK.

This is an uncharacterized protein from Dictyostelium discoideum (Social amoeba).